Reading from the N-terminus, the 325-residue chain is Tetraacyldisaccharide 4'-kinase (325 aa).

Thr-55 to Thr-62 lines the ATP pocket.

It belongs to the LpxK family.

It carries out the reaction a lipid A disaccharide + ATP = a lipid IVA + ADP + H(+). Its pathway is glycolipid biosynthesis; lipid IV(A) biosynthesis; lipid IV(A) from (3R)-3-hydroxytetradecanoyl-[acyl-carrier-protein] and UDP-N-acetyl-alpha-D-glucosamine: step 6/6. Transfers the gamma-phosphate of ATP to the 4'-position of a tetraacyldisaccharide 1-phosphate intermediate (termed DS-1-P) to form tetraacyldisaccharide 1,4'-bis-phosphate (lipid IVA). The chain is Tetraacyldisaccharide 4'-kinase from Cronobacter sakazakii (strain ATCC BAA-894) (Enterobacter sakazakii).